A 135-amino-acid chain; its full sequence is Flagellar assembly factor FliW 1 (135 aa).

This sequence belongs to the FliW family. As to quaternary structure, interacts with translational regulator CsrA and flagellin(s).

Its subcellular location is the cytoplasm. Functionally, acts as an anti-CsrA protein, binds CsrA and prevents it from repressing translation of its target genes, one of which is flagellin. Binds to flagellin and participates in the assembly of the flagellum. In Helicobacter pylori (strain HPAG1), this protein is Flagellar assembly factor FliW 1.